The following is a 178-amino-acid chain: Large ribosomal subunit protein uL6 (178 aa).

It belongs to the universal ribosomal protein uL6 family. As to quaternary structure, part of the 50S ribosomal subunit.

In terms of biological role, this protein binds to the 23S rRNA, and is important in its secondary structure. It is located near the subunit interface in the base of the L7/L12 stalk, and near the tRNA binding site of the peptidyltransferase center. This chain is Large ribosomal subunit protein uL6, found in Buchnera aphidicola subsp. Schizaphis graminum (strain Sg).